The following is a 428-amino-acid chain: Protein CLP1 homolog (428 aa).

Residues glutamate 22, lysine 63, and 127–132 (DVGKST) each bind ATP.

The protein belongs to the Clp1 family. Clp1 subfamily.

Its subcellular location is the nucleus. Required for endonucleolytic cleavage during polyadenylation-dependent pre-mRNA 3'-end formation. The polypeptide is Protein CLP1 homolog (Nematostella vectensis (Starlet sea anemone)).